A 233-amino-acid chain; its full sequence is Probable septum site-determining protein MinC (233 aa).

Belongs to the MinC family. As to quaternary structure, interacts with MinD and FtsZ.

Functionally, cell division inhibitor that blocks the formation of polar Z ring septums. Rapidly oscillates between the poles of the cell to destabilize FtsZ filaments that have formed before they mature into polar Z rings. Prevents FtsZ polymerization. This Proteus mirabilis (strain HI4320) protein is Probable septum site-determining protein MinC.